Consider the following 187-residue polypeptide: Ribosome-recycling factor (187 aa).

This sequence belongs to the RRF family.

It localises to the cytoplasm. Responsible for the release of ribosomes from messenger RNA at the termination of protein biosynthesis. May increase the efficiency of translation by recycling ribosomes from one round of translation to another. The sequence is that of Ribosome-recycling factor from Parabacteroides distasonis (strain ATCC 8503 / DSM 20701 / CIP 104284 / JCM 5825 / NCTC 11152).